A 541-amino-acid chain; its full sequence is Chaperonin GroEL 2 (541 aa).

Residues 29 to 32, 86 to 90, Gly413, 476 to 478, and Asp492 each bind ATP; these read TLGP, DGTTT, and NAA.

The protein belongs to the chaperonin (HSP60) family. Forms a cylinder of 14 subunits composed of two heptameric rings stacked back-to-back. Interacts with the co-chaperonin GroES.

The protein localises to the secreted. It is found in the capsule. The protein resides in the cell surface. Its subcellular location is the cell wall. It catalyses the reaction ATP + H2O + a folded polypeptide = ADP + phosphate + an unfolded polypeptide.. Functionally, together with its co-chaperonin GroES, plays an essential role in assisting protein folding. The GroEL-GroES system forms a nano-cage that allows encapsulation of the non-native substrate proteins and provides a physical environment optimized to promote and accelerate protein folding. This Mycolicibacterium vanbaalenii (strain DSM 7251 / JCM 13017 / BCRC 16820 / KCTC 9966 / NRRL B-24157 / PYR-1) (Mycobacterium vanbaalenii) protein is Chaperonin GroEL 2.